The chain runs to 208 residues: CASP-like protein 1D1 (208 aa).

Residues 1-36 (MSSVDTEKPAPPPLETEAPPPPPPPPPPPPPPPPPP) form a disordered region. At 1–41 (MSSVDTEKPAPPPLETEAPPPPPPPPPPPPPPPPPPAGYSA) the chain is on the cytoplasmic side. Positions 9-36 (PAPPPLETEAPPPPPPPPPPPPPPPPPP) are enriched in pro residues. Residues 42–62 (LDVVLRILLLGSAVASVVVMV) traverse the membrane as a helical segment. Residues 63-89 (TSVQTKLIAVAGVPVLVSNKAKFQNSP) lie on the Extracellular side of the membrane. A helical membrane pass occupies residues 90–110 (AFIYFVAALSVVGLYSIITTL). Residues 111–133 (ASFIFISKPSCSTKTILHLAIWD) are Cytoplasmic-facing. The helical transmembrane segment at 134-154 (VLMLGLAASATGTAGGVAYVG) threads the bilayer. Residues 155-180 (LKGNSHVGWNKVCNTYDKFCRHVGGS) are Extracellular-facing. A helical transmembrane segment spans residues 181–201 (IAVALFASILLVLLVWLSLFT). The Cytoplasmic segment spans residues 202–208 (LYSRIRK).

This sequence belongs to the Casparian strip membrane proteins (CASP) family. Homodimer and heterodimers.

Its subcellular location is the cell membrane. This Vitis vinifera (Grape) protein is CASP-like protein 1D1.